A 469-amino-acid chain; its full sequence is DNA-binding transcriptional regulator NtrC (469 aa).

The region spanning 5–119 is the Response regulatory domain; that stretch reads IVWVVDDDSS…EAVALVERAI (115 aa). Position 54 is a 4-aspartylphosphate (D54). The 230-residue stretch at 140–369 folds into the Sigma-54 factor interaction domain; it reads MIGEAPAMQD…LENTCRWLTV (230 aa). Residues 168 to 175 and 231 to 240 contribute to the ATP site; these read GESGTGKE and ADGGTLFLDE. The segment at residues 445-464 is a DNA-binding region (H-T-H motif); the sequence is KQEAARLLGWGRNTLTRKLK.

Post-translationally, phosphorylated and dephosphorylated by NtrB.

It localises to the cytoplasm. Its function is as follows. Member of the two-component regulatory system NtrB/NtrC, which controls expression of the nitrogen-regulated (ntr) genes in response to nitrogen limitation. Phosphorylated NtrC binds directly to DNA and stimulates the formation of open promoter-sigma54-RNA polymerase complexes. The sequence is that of DNA-binding transcriptional regulator NtrC (glnG) from Salmonella typhimurium (strain LT2 / SGSC1412 / ATCC 700720).